The primary structure comprises 55 residues: Large ribosomal subunit protein bL33 (55 aa).

This sequence belongs to the bacterial ribosomal protein bL33 family.

The polypeptide is Large ribosomal subunit protein bL33 (Acidiphilium cryptum (strain JF-5)).